The sequence spans 341 residues: Syntaxin-122 (341 aa).

M1 is modified (N-acetylmethionine). Disordered regions lie at residues 1-22 (MNDLLSGSFKTSVADGSSPPHS) and 111-137 (LDRANEVNRSLPESGPGSSSDRQRTSV). At 1 to 284 (MNDLLSGSFK…ARFYQKNTRK (284 aa)) the chain is on the cytoplasmic side. 2 stretches are compositionally biased toward polar residues: residues 8–21 (SFKTSVADGSSPPH) and 126–137 (PGSSSDRQRTSV). The stretch at 64 to 185 (CHNLRSSNEQ…GEYPDEATLE (122 aa)) forms a coiled coil. A t-SNARE coiled-coil homology domain is found at 213 to 275 (INEIQERHDA…RSGADRLVKA (63 aa)). A helical; Anchor for type IV membrane protein membrane pass occupies residues 285 to 305 (WTCFAILLLLIIVVLIVVFTV). Residues 306–341 (KPWESNGGGGGGAPRQATPVQAQPPPPPAVNRRLLR) lie on the Vesicular side of the membrane. The disordered stretch occupies residues 312–341 (GGGGGGAPRQATPVQAQPPPPPAVNRRLLR).

Belongs to the syntaxin family. As to quaternary structure, part of the t-SNARE complex.

The protein localises to the membrane. Functionally, vesicle trafficking protein that functions in the secretory pathway. This is Syntaxin-122 (SYP122) from Arabidopsis thaliana (Mouse-ear cress).